The following is a 491-amino-acid chain: MTKQWEVVIGLETHAQLSTHSKIFSGASTQFGAAPNTQACPVDLALPGTLPVMNRGAVERAIQFGLAIGATVAPRSIFARKNYFYPDLPKGYQISQYEIPVVQGGQVTIQVPANEKANTPAYEKVVNLTRAHLEEDAGKSLHEDFAGMTGIDLNRAGTPLLEIVTEPEMRSAAEAVAYAKTLHTLVTWLGICDGNMQEGSFRCDANVSVRPVGQAEFGTRAEIKNLNSFRFLEEAIQYEVRRQIELIEDGGTVVQETRLYDPDKRETRSMRSKEDAHDYRYFPDPDLMPLVIDAAWVERVKSEMPELPVAIQQRFVTQYGLTPYDANVLTSSKAMAAYYEAVVSKLGPANAKAAANWLMGEVSSQLNREDLDIAASPVSSAQLALLLQRIADGTISHKIAKEIFLSIWEEKATDEAATDRIIEAKGLKQISDTGALEAIIDEVLAANQKSVEEFRAGKEKAFNALIGQAMKATKGKANPAQVNELLRKKLS.

The protein belongs to the GatB/GatE family. GatB subfamily. As to quaternary structure, heterotrimer of A, B and C subunits.

It carries out the reaction L-glutamyl-tRNA(Gln) + L-glutamine + ATP + H2O = L-glutaminyl-tRNA(Gln) + L-glutamate + ADP + phosphate + H(+). The catalysed reaction is L-aspartyl-tRNA(Asn) + L-glutamine + ATP + H2O = L-asparaginyl-tRNA(Asn) + L-glutamate + ADP + phosphate + 2 H(+). Its function is as follows. Allows the formation of correctly charged Asn-tRNA(Asn) or Gln-tRNA(Gln) through the transamidation of misacylated Asp-tRNA(Asn) or Glu-tRNA(Gln) in organisms which lack either or both of asparaginyl-tRNA or glutaminyl-tRNA synthetases. The reaction takes place in the presence of glutamine and ATP through an activated phospho-Asp-tRNA(Asn) or phospho-Glu-tRNA(Gln). The chain is Aspartyl/glutamyl-tRNA(Asn/Gln) amidotransferase subunit B from Paraburkholderia xenovorans (strain LB400).